The sequence spans 423 residues: tRNA(Ile)-lysidine synthase (423 aa).

29-34 (SGGKDS) contributes to the ATP binding site.

This sequence belongs to the tRNA(Ile)-lysidine synthase family.

The protein resides in the cytoplasm. The enzyme catalyses cytidine(34) in tRNA(Ile2) + L-lysine + ATP = lysidine(34) in tRNA(Ile2) + AMP + diphosphate + H(+). Ligates lysine onto the cytidine present at position 34 of the AUA codon-specific tRNA(Ile) that contains the anticodon CAU, in an ATP-dependent manner. Cytidine is converted to lysidine, thus changing the amino acid specificity of the tRNA from methionine to isoleucine. The polypeptide is tRNA(Ile)-lysidine synthase (Lactococcus lactis subsp. lactis (strain IL1403) (Streptococcus lactis)).